Reading from the N-terminus, the 3099-residue chain is MASITFGNACTVVFGQVRKEEVTAGPVAVNLNEGTRMVVVPTAAQMATPTPSVSIKIINRWSNKAVSSYERQVEDVFANFFAKKERSDELLTRYYGKVVQKGNKLMVKRAPLHVARVLEKQRLQDIEDEKAFLQYRDAGVHVAGSVKFTDTRSRGQTVSFRTEHYKPTGKIVQKKKAQKQRANADVDHLIDEVMKICSADCKQVEFISMGKRRLTAKFKLFGKSVIPCIHLAHEQGRRLRRELDPRIHEQVIAHLVTGRKVRELIKDDMVTYGWSGAILNKNLFKRTPFRWDEVVIRGRLYGKLVDARSKLSECSKDKIHQYSSFEAQFWKGWKNKFDTLHPHNKDHICEPTINNEKCGEIVATIFQAIHPVIKVSCSTCRERLTKASNEELNEYLATNLACHKATFDDMRQQHATVNTVLNKIEQTSLANPNLKDSMEIVRLLQNLNQTQARQLMKVNNTLLKGNVATSEEFSDATTQLLEVTRWYAKHLSLVDEGSISSFRNKATSKSLINPSLLCDNQLDRNGNFVWGERGRHSKRFFENFFEEVVPGGGYKKYQIRNSPNCTRKLAIGNLIVPMSLERARNALIGESVERLPVTEACVSRVNGAFMHVASCVTSDNGSAHFSPLYSPTKRHLVVGTTGDSKYIDLPATESDKMYVAKEGYCYINIFLAMLVNVNEDSAKDFTKMIRDTIVPMLGTWPSMMDVATACYILTVFHPETKSAELPRILVDHTNKTMHVIDSFGSISTGYHILKAGTVSQLIHFASNELVSEMKHYVVGGEAPHARRMRMEKALIQGIFKPKQLVYLIEEDPYILMMSLVSPTLLINLFNVGGLEVAMKHWIKKEMNIGLIFSMLSSLAQKVSRADLVNEQITMIDANAAQFIETLAGIDVENPMRNELVSALTMMLARSDVDSTLNKTGFTGFSDTLLEMREKIIGDELNKVWSELSWWEKFSSIIFSRRARKHIMAPLPNTKLHAIDDRYAISCTWLHGKIKARFNGAKSATLEVCKKVTSILKRNTVDSILYICRKCYSDIFYFVNVMLISSMILSVIYTMHKMVIESRAHKQAMVIMKMREDELVVKQMYDQYCKLANETPTKEEFFQYVCKMNKELGERIAPEFEEGSLVVYQAKTETELGLEKVVAYLALIAMIFDGERSDAVFRALSKLKTVFGTLGETVRYQSLDEIESVADEKKMTIDFELEGSEASSSTVMSAKFSDWWYKQLETNRVVPHYRIGGEFVEFTRKTAAEVVNNMRASNASEFLVRGAVGSGKSTGLPHLLAQKGRVLLLEPTRPLAENVCKQLRQAPFQQNPTLRMRGLTTFGSSNIVIMTSGFALHYYANNPTKLQEYDFVMIDESHTMDASAMAFYCLVREYNFQGKIIKVSATPPGKECEFKTQFDVALLIEEDLSFQQFAQSQGQGGNADMTKHGDNILVYVASYNDVDQLAELLIRGNHFVTKVDGRTMKMGSTEIVSKGTASKKHYIIATNIIENGVTLDVDVVVDFGQKVVAELDGDSRCMRYRKVAVSYGERIQRLGRVGRVKKGTALRIGHTEHGISEIPASISTEAAFLCFAYGLPVITHNVTVSILANCTVQQARTMMLFELSPFFLADLVKYNGSMHPEVHKLLKPYKLRDSEIELCKLAIPNSSIGRWLSVHEYAKLGIKIHAVDSVRIPFAGRGIPDKLYSELWHIIQEHKHEAGFGRLTSASASTIAYTLSTDPEAIPRTIALLDNLIAEEMQKKAHFEALNSTLCSQRFTLKNIVDTVRQRYMKDHSKHNIEVLQSARSQILEFNSATHDFKKVASLLGYGFLDTVQYQSKNELSKRLGLKGRWNKSLVTNDLLVCGMVLFGGVWMVWEYAKSAMNEPVRYQGKRQNQKLKFRDARDRKVGREVYGDDGTIEHFFGEAYTKKGKSKGNHTVKGMGRKTRRFIHMYGFDPTEYSFVRFVDPLTGYAIDENITCDISLVQDEVAEVRKQFINEDEISAQSIAENPGIIAYYMSRNADKALKIDLTPHNPLAVGRGGSSIAGFPEREYELRQTGKPLEVKKSEVPPVSKDVVATEGKSMCRGLRNYNPIATSICKLVNESDGHSETIHGIGFGPVIITNSHLFRRNNGTLQIQTHHGVFRVKNSTQLQVSHMAKKDMIIIKMPCDVPPFPSKLRFRQPEQGEKAVLVGSLFQQKSITSSVSESTMVMPVNDSGYWRHWVSTKDGDCGLPLVSTVDGAILGLHGLTSTKSDRNYFVPFDEQFERDILANLEKLDWKRHWLHSSDLIAWGGMSLKENHPHDCFRTSKLVTDLLGLTKDSVEYQSGQDKWVLAGLENNLKAVAQSESQLVTKHVVKGQCMYFQEYLATHSTAEKFFKPLMGAYQPSKLNKEAFTKDLYKYQNEIIVGEVDKDAFDNAVEAVIYLLDDLGFGECAYVTDEEAILDSLNMKAAVGALYKGKKKEYFESLSEPEKHHIVQASCERLFYGEMGVWNGSLKAELRPKEKVALNKTRTFTAAPIDTLLGGKCCVDDFNNRFYSLNIEGPWTVGMTKFYGGWDKLMRKLPDGWRYCHADGSQFDSSLTPFLLNAVLAVRLMFMEDWWVGEQMLRNFYTEIIYTPILTPDGTIVKKFKGNNSGQPSTVVDNTLMVMIAMFYGMKKLNWTDEQIKERIVFFAXGDDLIIAVQPEHEGILDTLQRSLGELGLKYDFSERCDDRQELWFMSHQGHLVDGMYIPKLEQERIVSILEWDRSTVIEHRAEAICAAMIEAWGYPELLKQIRLFYAWILDHDMFKSLVAEGKLPYIAETALRKLYTDADATDVELEEYILRFTEVDEDEDHNDEVRYQSGENKSKVEVDAAAAKLKEKEKEKHKKTEEGTSEGTSQTKEPDVDTGSQGIVYVPKLAKITKKMRMPMVGGQVILHIPHLLDYKPEQVDLSNTRSSQQQFTAWYNGLKEAYEITDDTSMSVLMNGLMVWCIENGTSPNINGNWTMMDGHEQNEYPLKPVIENAKPTFRQIMHHFSDAAEAYIEMRNAEKPYMPRYGLQRNLRDFSYARIAFDFYEITSRTSAKAREIHMQMKAAALNNVAIKTFGLDGNVGTQDEDTERHTANDVNRNMHSLLGMRQM.

In terms of domain architecture, Peptidase S30 spans 180–322 (QRANADVDHL…ECSKDKIHQY (143 aa)). Residues H233, E242, and S275 each act as for P1 proteinase activity in the active site. Positions 374–377 (KVSC) match the Involved in interaction with stylet and aphid transmission motif. Residues 631–633 (PTK) carry the Involved in virions binding and aphid transmission motif. The 123-residue stretch at 657–779 (MYVAKEGYCY…VSEMKHYVVG (123 aa)) folds into the Peptidase C6 domain. Residues C665 and H738 each act as for helper component proteinase activity in the active site. The Helicase ATP-binding domain maps to 1252 to 1404 (NMRASNASEF…TQFDVALLIE (153 aa)). 1265-1272 (GAVGSGKS) contributes to the ATP binding site. The DESH box motif lies at 1354–1357 (DESH). The 160-residue stretch at 1423-1582 (DMTKHGDNIL…GLPVITHNVT (160 aa)) folds into the Helicase C-terminal domain. The Nuclear localization signal motif lies at 1906–1915 (KKGKSKGNHT). At Y1930 the chain carries O-(5'-phospho-RNA)-tyrosine. Residues 2058–2276 (GKSMCRGLRN…IAWGGMSLKE (219 aa)) form the Peptidase C4 domain. Catalysis depends on for nuclear inclusion protein A activity residues H2103, D2138, and C2208. The RdRp catalytic domain maps to 2545–2669 (WRYCHADGSQ…AVQPEHEGIL (125 aa)). The segment covering 2838–2851 (LKEKEKEKHKKTEE) has biased composition (basic and acidic residues). The disordered stretch occupies residues 2838-2869 (LKEKEKEKHKKTEEGTSEGTSQTKEPDVDTGS). T3082 is subject to Phosphothreonine.

It belongs to the potyviridae genome polyprotein family. As to quaternary structure, interacts with host eIF4E protein (via cap-binding region); this interaction mediates the translation of the VPg-viral RNA conjugates. Part of a complex that comprises VPg, RNA, host EIF4E and EIF4G; this interaction mediates the translation of the VPg-viral RNA conjugates. Post-translationally, VPg is uridylylated by the polymerase and is covalently attached to the 5'-end of the genomic RNA. This uridylylated form acts as a nucleotide-peptide primer for the polymerase. Potyviral RNA is expressed as two polyproteins which undergo post-translational proteolytic processing. Genome polyprotein is processed by NIa-pro, P1 and HC-pro proteinases resulting in the production of at least ten individual proteins. P3N-PIPO polyprotein is cleaved by P1 and HC-pro proteinases resulting in the production of three individual proteins. The P1 proteinase and the HC-pro cleave only their respective C-termini autocatalytically. 6K1 is essential for proper proteolytic separation of P3 from CI.

It is found in the host cytoplasmic vesicle. It localises to the host nucleus. Its subcellular location is the virion. The catalysed reaction is RNA(n) + a ribonucleoside 5'-triphosphate = RNA(n+1) + diphosphate. The enzyme catalyses Hydrolyzes glutaminyl bonds, and activity is further restricted by preferences for the amino acids in P6 - P1' that vary with the species of potyvirus, e.g. Glu-Xaa-Xaa-Tyr-Xaa-Gln-|-(Ser or Gly) for the enzyme from tobacco etch virus. The natural substrate is the viral polyprotein, but other proteins and oligopeptides containing the appropriate consensus sequence are also cleaved.. It catalyses the reaction Hydrolyzes a Gly-|-Gly bond at its own C-terminus, commonly in the sequence -Tyr-Xaa-Val-Gly-|-Gly, in the processing of the potyviral polyprotein.. Its function is as follows. Required for aphid transmission and also has proteolytic activity. Only cleaves a Gly-Gly dipeptide at its own C-terminus. Interacts with virions and aphid stylets. Acts as a suppressor of RNA-mediated gene silencing, also known as post-transcriptional gene silencing (PTGS), a mechanism of plant viral defense that limits the accumulation of viral RNAs. May have RNA-binding activity. Functionally, has helicase activity. It may be involved in replication. Indispensable for virus replication. Reduces the abundance of host transcripts related to jasmonic acid biosynthesis therefore altering the host defenses. In order to increase its own stability, decreases host protein degradation pathways. In terms of biological role, indispensable for virus replication. Its function is as follows. Mediates the cap-independent, EIF4E-dependent translation of viral genomic RNAs. Binds to the cap-binding site of host EIF4E and thus interferes with the host EIF4E-dependent mRNA export and translation. VPg-RNA directly binds EIF4E and is a template for transcription. Also forms trimeric complexes with EIF4E-EIF4G, which are templates for translation. Functionally, has RNA-binding and proteolytic activities. An RNA-dependent RNA polymerase that plays an essential role in the virus replication. In terms of biological role, involved in aphid transmission, cell-to-cell and systemis movement, encapsidation of the viral RNA and in the regulation of viral RNA amplification. This chain is Genome polyprotein, found in Peanut mottle virus (strain M).